Here is a 425-residue protein sequence, read N- to C-terminus: Serine--tRNA ligase (425 aa).

233–235 serves as a coordination point for L-serine; that stretch reads TAE. Residue 264 to 266 participates in ATP binding; the sequence is RRE. Residue E287 participates in L-serine binding. 351–354 lines the ATP pocket; that stretch reads EISS. S387 contacts L-serine.

This sequence belongs to the class-II aminoacyl-tRNA synthetase family. Type-1 seryl-tRNA synthetase subfamily. Homodimer. The tRNA molecule binds across the dimer.

It localises to the cytoplasm. It carries out the reaction tRNA(Ser) + L-serine + ATP = L-seryl-tRNA(Ser) + AMP + diphosphate + H(+). The catalysed reaction is tRNA(Sec) + L-serine + ATP = L-seryl-tRNA(Sec) + AMP + diphosphate + H(+). It participates in aminoacyl-tRNA biosynthesis; selenocysteinyl-tRNA(Sec) biosynthesis; L-seryl-tRNA(Sec) from L-serine and tRNA(Sec): step 1/1. Catalyzes the attachment of serine to tRNA(Ser). Is also able to aminoacylate tRNA(Sec) with serine, to form the misacylated tRNA L-seryl-tRNA(Sec), which will be further converted into selenocysteinyl-tRNA(Sec). The chain is Serine--tRNA ligase from Thermotoga neapolitana (strain ATCC 49049 / DSM 4359 / NBRC 107923 / NS-E).